The primary structure comprises 188 residues: ATP synthase subunit b 1 (188 aa).

Residues 7–27 (LSVLALAMLAANPAFAAGGGI) form a helical membrane-spanning segment.

This sequence belongs to the ATPase B chain family. As to quaternary structure, F-type ATPases have 2 components, F(1) - the catalytic core - and F(0) - the membrane proton channel. F(1) has five subunits: alpha(3), beta(3), gamma(1), delta(1), epsilon(1). F(0) has three main subunits: a(1), b(2) and c(10-14). The alpha and beta chains form an alternating ring which encloses part of the gamma chain. F(1) is attached to F(0) by a central stalk formed by the gamma and epsilon chains, while a peripheral stalk is formed by the delta and b chains.

Its subcellular location is the cell inner membrane. In terms of biological role, f(1)F(0) ATP synthase produces ATP from ADP in the presence of a proton or sodium gradient. F-type ATPases consist of two structural domains, F(1) containing the extramembraneous catalytic core and F(0) containing the membrane proton channel, linked together by a central stalk and a peripheral stalk. During catalysis, ATP synthesis in the catalytic domain of F(1) is coupled via a rotary mechanism of the central stalk subunits to proton translocation. Its function is as follows. Component of the F(0) channel, it forms part of the peripheral stalk, linking F(1) to F(0). This Roseobacter denitrificans (strain ATCC 33942 / OCh 114) (Erythrobacter sp. (strain OCh 114)) protein is ATP synthase subunit b 1.